The chain runs to 355 residues: Peptide chain release factor 1 (355 aa).

Gln233 carries the post-translational modification N5-methylglutamine.

Belongs to the prokaryotic/mitochondrial release factor family. Methylated by PrmC. Methylation increases the termination efficiency of RF1.

Its subcellular location is the cytoplasm. Peptide chain release factor 1 directs the termination of translation in response to the peptide chain termination codons UAG and UAA. This chain is Peptide chain release factor 1, found in Bacillus anthracis.